A 531-amino-acid polypeptide reads, in one-letter code: Cytochrome P450 monooxygenase peniB (531 aa).

A helical transmembrane segment spans residues 30 to 48 (ILSIAAVVFLGYLLLRPLF). Cys-445 serves as a coordination point for heme.

This sequence belongs to the cytochrome P450 family. Heme is required as a cofactor.

The protein resides in the membrane. The catalysed reaction is silphinene-15-oate + 2 reduced [NADPH--hemoprotein reductase] + 2 O2 = gamma-lactone-2-keto[5.5.5.5]fenestrane + 2 oxidized [NADPH--hemoprotein reductase] + 3 H2O + H(+). It functions in the pathway secondary metabolite biosynthesis; terpenoid biosynthesis. Its function is as follows. Cytochrome P450 monooxygenase; part of the gene cluster that mediates the biosynthesis of penifulvin A, a potent insecticidal sesquiterpene that features a [5.5.5.6]dioxafenestrane ring. Within the pathway, peniB catalyzes the multi-step oxidation of silphinene to synthesize gamma-lactone-2-keto[5.5.5.5]fenestrane, including oxidation of the C15 methylgroup in silphinene to form silphinene-15-oic acid, activationof the C1-C2 double bond to form the gamma-lactone-2-hydroxy[5.5.5.5]fenestrane, and dehydrogenation of the hydroxy group at C2 of gamma-lactone-2-hydroxy[5.5.5.5]fenestrane to generate gamma-lactone-2-keto[5.5.5.5]fenestrane. The first step of the pathway is performed by the sesquiterpene cyclase peniA that generates the angular triquinane scaffold silphinene via cyclization of the linear farnesyl pyrophosphate (FPP). The cytochrome P450 monooxygenase peniB and the flavin-dependent monooxygenase peniC then catalyze a series of oxidation reactions to transform silphinene into penifulvin A. This is Cytochrome P450 monooxygenase peniB from Penicillium patulum (Penicillium griseofulvum).